Reading from the N-terminus, the 253-residue chain is Tetraspanin-3 (253 aa).

Topologically, residues 1–11 (MGQCGITSSKT) are cytoplasmic. Residues 12–32 (VLVFLNLIFWGAAGILCYVGA) form a helical membrane-spanning segment. At 33–50 (YVFITYDDYDHFFEDVYT) the chain is on the extracellular side. Residues 51–71 (LFPAVVIIAVGALLFIIGLIG) form a helical membrane-spanning segment. Residues 72–85 (CCATIRESRCGLAT) are Cytoplasmic-facing. The chain crosses the membrane as a helical span at residues 86–106 (FVFILLLVFVTEVVVVVLGYV). Topologically, residues 107–212 (YRAKVENEVD…KKLQEILMHV (106 aa)) are extracellular. N-linked (GlcNAc...) asparagine glycosylation is found at asparagine 127, asparagine 152, asparagine 167, and asparagine 183. Residues 213–233 (IWAALAFAAIQLLGMLCACIV) traverse the membrane as a helical segment. Over 234–253 (LCRRSRDPAYELLITGGTYA) the chain is Cytoplasmic.

It belongs to the tetraspanin (TM4SF) family. Interacts with claudin-11/CLDN11 and integrins.

It is found in the membrane. In terms of biological role, regulates the proliferation and migration of oligodendrocytes, a process essential for normal myelination and repair. This Mus musculus (Mouse) protein is Tetraspanin-3 (Tspan3).